Reading from the N-terminus, the 283-residue chain is 4-diphosphocytidyl-2-C-methyl-D-erythritol kinase (283 aa).

Residue Lys13 is part of the active site. 96–106 (PMGGGIGGGSS) lines the ATP pocket. The active site involves Asp138.

Belongs to the GHMP kinase family. IspE subfamily.

The catalysed reaction is 4-CDP-2-C-methyl-D-erythritol + ATP = 4-CDP-2-C-methyl-D-erythritol 2-phosphate + ADP + H(+). It functions in the pathway isoprenoid biosynthesis; isopentenyl diphosphate biosynthesis via DXP pathway; isopentenyl diphosphate from 1-deoxy-D-xylulose 5-phosphate: step 3/6. Functionally, catalyzes the phosphorylation of the position 2 hydroxy group of 4-diphosphocytidyl-2C-methyl-D-erythritol. The chain is 4-diphosphocytidyl-2-C-methyl-D-erythritol kinase from Pseudomonas fluorescens (strain SBW25).